Reading from the N-terminus, the 268-residue chain is 4-hydroxy-tetrahydrodipicolinate reductase (268 aa).

Residues 8–13 (GACGKM), D34, 95–97 (GTT), and 121–124 (APNF) each bind NAD(+). H151 (proton donor/acceptor) is an active-site residue. H152 lines the (S)-2,3,4,5-tetrahydrodipicolinate pocket. K155 functions as the Proton donor in the catalytic mechanism. (S)-2,3,4,5-tetrahydrodipicolinate is bound at residue 161–162 (GT).

Belongs to the DapB family.

The protein resides in the cytoplasm. The catalysed reaction is (S)-2,3,4,5-tetrahydrodipicolinate + NAD(+) + H2O = (2S,4S)-4-hydroxy-2,3,4,5-tetrahydrodipicolinate + NADH + H(+). It catalyses the reaction (S)-2,3,4,5-tetrahydrodipicolinate + NADP(+) + H2O = (2S,4S)-4-hydroxy-2,3,4,5-tetrahydrodipicolinate + NADPH + H(+). Its pathway is amino-acid biosynthesis; L-lysine biosynthesis via DAP pathway; (S)-tetrahydrodipicolinate from L-aspartate: step 4/4. Catalyzes the conversion of 4-hydroxy-tetrahydrodipicolinate (HTPA) to tetrahydrodipicolinate. This Dictyoglomus turgidum (strain DSM 6724 / Z-1310) protein is 4-hydroxy-tetrahydrodipicolinate reductase.